We begin with the raw amino-acid sequence, 159 residues long: Small ribosomal subunit protein uS4 (159 aa).

One can recognise an S4 RNA-binding domain in the interval 106 to 158 (RRLQTLVFRMGLAKSIHHARQLVVHGHVLVAGRRVTSPGFLVPRELEDKITIE).

The protein belongs to the universal ribosomal protein uS4 family. As to quaternary structure, part of the 30S ribosomal subunit. Contacts protein S5. The interaction surface between S4 and S5 is involved in control of translational fidelity.

Its function is as follows. One of the primary rRNA binding proteins, it binds directly to 16S rRNA where it nucleates assembly of the body of the 30S subunit. Functionally, with S5 and S12 plays an important role in translational accuracy. The chain is Small ribosomal subunit protein uS4 from Pyrobaculum calidifontis (strain DSM 21063 / JCM 11548 / VA1).